The sequence spans 180 residues: Type-1 fimbrial protein subunit (180 aa).

The N-terminal stretch at 1–22 (MKKVLLPLAALVLSATASNAMA) is a signal peptide. Cysteines 38 and 78 form a disulfide.

The protein belongs to the fimbrial protein family.

Its subcellular location is the fimbrium. In terms of biological role, fimbriae (also called pili), polar filaments radiating from the surface of the bacterium to a length of 0.5-1.5 micrometers and numbering 100-300 per cell, enable bacteria to colonize the epithelium of specific host organs. This chain is Type-1 fimbrial protein subunit (fimA), found in Serratia marcescens.